The chain runs to 413 residues: Phosphopentomutase (413 aa).

Mn(2+) contacts are provided by Asp11, Asp306, His311, Asp347, His348, and His359.

The protein belongs to the phosphopentomutase family. Requires Mn(2+) as cofactor.

Its subcellular location is the cytoplasm. It carries out the reaction 2-deoxy-alpha-D-ribose 1-phosphate = 2-deoxy-D-ribose 5-phosphate. It catalyses the reaction alpha-D-ribose 1-phosphate = D-ribose 5-phosphate. It functions in the pathway carbohydrate degradation; 2-deoxy-D-ribose 1-phosphate degradation; D-glyceraldehyde 3-phosphate and acetaldehyde from 2-deoxy-alpha-D-ribose 1-phosphate: step 1/2. In terms of biological role, isomerase that catalyzes the conversion of deoxy-ribose 1-phosphate (dRib-1-P) and ribose 1-phosphate (Rib-1-P) to deoxy-ribose 5-phosphate (dRib-5-P) and ribose 5-phosphate (Rib-5-P), respectively. This Helicobacter pylori (strain HPAG1) protein is Phosphopentomutase.